The following is a 193-amino-acid chain: Cysteine and glycine-rich protein 1 (193 aa).

Positions 10–61 constitute an LIM zinc-binding 1 domain; sequence CGVCQKTVYFAEEVQCEGNSFHKSCFLCMVCKKNLDSTTVAVHGEEIYCKSC. The Nuclear localization signal motif lies at 64 to 69; it reads KKYGPK. Serine 81 is modified (phosphoserine). Lysine 84 carries the N6-acetyllysine modification. Residue lysine 91 forms a Glycyl lysine isopeptide (Lys-Gly) (interchain with G-Cter in SUMO2) linkage. Residues lysine 112, lysine 131, lysine 137, and lysine 161 each carry the N6-acetyllysine modification. Residues 119–170 enclose the LIM zinc-binding 2 domain; sequence CPRCSQAVYAAEKVIGAGKSWHKSCFRCAKCGKGLESTTLADKDGEIYCKGC. A Phosphoserine modification is found at serine 192.

In terms of assembly, interacts with ASCC1; ASCC2 and TRIP4.

It localises to the nucleus. In terms of biological role, could play a role in neuronal development. The sequence is that of Cysteine and glycine-rich protein 1 (Csrp1) from Rattus norvegicus (Rat).